Reading from the N-terminus, the 281-residue chain is Transformer-2 protein homolog alpha (281 aa).

Residues 1–116 (MSDVEENNFE…TGSRANPDPN (116 aa)) are disordered. The residue at position 2 (S2) is an N-acetylserine. Phosphoserine occurs at positions 2 and 14. The residue at position 24 (T24) is a Phosphothreonine. Positions 51–82 (RSRSKSRSRSRRHSHRRYTRSRSHSHRRRSRS) are enriched in basic residues. S80, S82, and S84 each carry phosphoserine. T86 is subject to Phosphothreonine. Over residues 90-108 (RRRRSRSHSPMSNRRRHTG) the composition is skewed to basic residues. A phosphoserine mark is found at S94 and S96. In terms of domain architecture, RRM spans 117–195 (TCLGVFGLSL…RRIRVDYSIT (79 aa)). A Glycyl lysine isopeptide (Lys-Gly) (interchain with G-Cter in SUMO2) cross-link involves residue K196. The interval 196-223 (KRAHTPTPGIYMGRPTHSGGGGGGGGGG) is linker. A disordered region spans residues 199–281 (HTPTPGIYMG…RSRSYSPRRY (83 aa)). T200 and T202 each carry phosphothreonine. Positions 213–231 (SGGGGGGGGGGGGGGGGGG) are enriched in gly residues. An Omega-N-methylarginine modification is found at R233. Over residues 233 to 257 (RRRDSYYDRGYDRGYDRYEDYDYRR) the composition is skewed to basic and acidic residues. The residue at position 237 (S237) is a Phosphoserine. Basic residues predominate over residues 267–281 (YRSRSRSRSYSPRRY).

Belongs to the splicing factor SR family. Binds to A3 enhancer proteins SRp75, SRp55, SRp40 and SRp30. Interacts with ILDR1 (via C-terminus) and ILDR2. In terms of processing, phosphorylated in the RS domains. In terms of tissue distribution, expressed in inner ear.

It localises to the nucleus. Sequence-specific RNA-binding protein which participates in the control of pre-mRNA splicing. This chain is Transformer-2 protein homolog alpha, found in Mus musculus (Mouse).